The following is an 83-amino-acid chain: U20-theraphotoxin-Cg1a 2 (83 aa).

Positions 1-21 (MQVSVLITLAVLGVMFVWTSA) are cleaved as a signal peptide. Residues 22–47 (AELEERGSDQPAWLKSLERIFQSEER) constitute a propeptide that is removed on maturation. 3 cysteine pairs are disulfide-bonded: cysteine 49-cysteine 63, cysteine 56-cysteine 68, and cysteine 62-cysteine 76.

Belongs to the neurotoxin 10 (Hwtx-1) family. 40 (Jztx-35) subfamily. Expressed by the venom gland.

Its subcellular location is the secreted. In terms of biological role, probable ion channel inhibitor. The protein is U20-theraphotoxin-Cg1a 2 of Chilobrachys guangxiensis (Chinese earth tiger tarantula).